We begin with the raw amino-acid sequence, 130 residues long: Small ribosomal subunit protein uS9 (130 aa).

This sequence belongs to the universal ribosomal protein uS9 family.

The protein is Small ribosomal subunit protein uS9 of Desulfosudis oleivorans (strain DSM 6200 / JCM 39069 / Hxd3) (Desulfococcus oleovorans).